A 374-amino-acid chain; its full sequence is Putative L-lysine 2,3-aminomutase aq_1632 (374 aa).

One can recognise a Radical SAM core domain in the interval 86 to 314; it reads HKYPDTALLL…ARVRYVMSHE (229 aa). Residues C100, C104, and C107 each coordinate [4Fe-4S] cluster. N6-(pyridoxal phosphate)lysine is present on K317.

It belongs to the radical SAM superfamily. KamA family. It depends on [4Fe-4S] cluster as a cofactor. Pyridoxal 5'-phosphate is required as a cofactor.

The protein is Putative L-lysine 2,3-aminomutase aq_1632 of Aquifex aeolicus (strain VF5).